The following is a 163-amino-acid chain: MADLTLDYQLADGITKAPEENAVHSWVAATLDYLQENDKAVELTVRIAALEEAQQLNNEFRNKDYATNVLSFPFNSPVELPVTLLGDLVICQSVVEREAEEQQKSAIDHWTHMVIHGTLHLLGYDHIEDDEAEEMEQIERNILASLGISDPYQTADNMELNTQ.

Residues H116, H120, and H126 each contribute to the Zn(2+) site.

This sequence belongs to the endoribonuclease YbeY family. The cofactor is Zn(2+).

It is found in the cytoplasm. In terms of biological role, single strand-specific metallo-endoribonuclease involved in late-stage 70S ribosome quality control and in maturation of the 3' terminus of the 16S rRNA. This chain is Endoribonuclease YbeY, found in Idiomarina loihiensis (strain ATCC BAA-735 / DSM 15497 / L2-TR).